Reading from the N-terminus, the 186-residue chain is Ribosome-recycling factor (186 aa).

Residues 144-163 (EKDGVIGQDESRAQSERVQK) form a disordered region.

The protein belongs to the RRF family.

Its subcellular location is the cytoplasm. Functionally, responsible for the release of ribosomes from messenger RNA at the termination of protein biosynthesis. May increase the efficiency of translation by recycling ribosomes from one round of translation to another. The chain is Ribosome-recycling factor from Rhizobium etli (strain CIAT 652).